A 2215-amino-acid polypeptide reads, in one-letter code: Unconventional myosin-VIIa (2215 aa).

The Myosin motor domain maps to 65–741 (HGVEDMIRLG…HDMLLEVERD (677 aa)). 158-165 (GESGAGKT) contributes to the ATP binding site. The tract at residues 632–639 (FVRCIKPN) is actin-binding. IQ domains are found at residues 745–765 (TDRV…SNFL), 768–788 (KNAA…KNYG), 791–811 (RLGF…QQYR), 814–834 (RQRI…KAFR), and 837–857 (LWAV…RLHQ). Residues 858–935 (RLRAEYLWRL…LEQMERARHE (78 aa)) form an SAH region. Positions 1017–1253 (YTRRPLKQPL…PSWLELQATK (237 aa)) constitute a MyTH4 1 domain. The region spanning 1258-1602 (IMLPVTFMDG…LVVTFLEGLR (345 aa)) is the FERM 1 domain. Phosphoserine is present on Ser1569. Phosphothreonine is present on Thr1571. The SH3 domain maps to 1603–1672 (KRSKYVVALQ…PTDSVYVMPT (70 aa)). Residues 1747–1896 (HTREPLKQAL…PHLVEVEAIQ (150 aa)) enclose the MyTH4 2 domain. Residues 1902-2205 (IFHKVYFPDD…SYISQMLTAM (304 aa)) enclose the FERM 2 domain.

This sequence belongs to the TRAFAC class myosin-kinesin ATPase superfamily. Myosin family. Might homodimerize in a two headed molecule through the formation of a coiled-coil rod. Identified in a complex with USH1C and USH1G. Interacts with MYRIP. Interacts with RPE65. Interacts with CIB2. May interact with CALM. Interacts with WHRN. Interacts with PLEKHB1 (via PH domain). Interacts with PCDH15. Interacts with TWF2. Interacts with USH1G. Interacts with MYH9. Interacts (via MyTH4-FERM domains) with cytoplasmic regions of ADGRV1 and USH2A. Interacts with PDZD7 (via MyTH4-FERM domains). Interacts with CALML4. In terms of tissue distribution, expressed in the pigment epithelium and the photoreceptor cells of the retina. Also found in kidney, liver, testis, cochlea, lymphocytes. Not expressed in brain.

The protein resides in the cytoplasm. It localises to the cell cortex. Its subcellular location is the cytoskeleton. It is found in the synapse. ATP hydrolysis is inhibited by Mg(2+), already at a concentration of 0.4 mM. In terms of biological role, myosins are actin-based motor molecules with ATPase activity. Unconventional myosins serve in intracellular movements. Their highly divergent tails bind to membranous compartments, which are then moved relative to actin filaments. In the retina, plays an important role in the renewal of the outer photoreceptor disks. Plays an important role in the distribution and migration of retinal pigment epithelial (RPE) melanosomes and phagosomes, and in the regulation of opsin transport in retinal photoreceptors. In the inner ear, plays an important role in differentiation, morphogenesis and organization of cochlear hair cell bundles. Involved in hair-cell vesicle trafficking of aminoglycosides, which are known to induce ototoxicity. Motor protein that is a part of the functional network formed by USH1C, USH1G, CDH23 and MYO7A that mediates mechanotransduction in cochlear hair cells. Required for normal hearing. This Homo sapiens (Human) protein is Unconventional myosin-VIIa.